The primary structure comprises 602 residues: Type 2 DNA topoisomerase 6 subunit B (602 aa).

ATP-binding positions include Asn40, Asp71, 92–93 (SR), 102–109 (GQQGIGIS), and Lys425.

The protein belongs to the TOP6B family. In terms of assembly, homodimer. Heterotetramer of two Top6A and two Top6B chains.

The enzyme catalyses ATP-dependent breakage, passage and rejoining of double-stranded DNA.. In terms of biological role, relaxes both positive and negative superturns and exhibits a strong decatenase activity. This is Type 2 DNA topoisomerase 6 subunit B from Archaeoglobus fulgidus (strain ATCC 49558 / DSM 4304 / JCM 9628 / NBRC 100126 / VC-16).